Reading from the N-terminus, the 292-residue chain is Nucleotide-binding protein Ldb0621 (292 aa).

Position 14–21 (14–21 (GMSGAGKT)) interacts with ATP. Residue 64–67 (DLRV) participates in GTP binding.

This sequence belongs to the RapZ-like family.

Functionally, displays ATPase and GTPase activities. This is Nucleotide-binding protein Ldb0621 from Lactobacillus delbrueckii subsp. bulgaricus (strain ATCC 11842 / DSM 20081 / BCRC 10696 / JCM 1002 / NBRC 13953 / NCIMB 11778 / NCTC 12712 / WDCM 00102 / Lb 14).